We begin with the raw amino-acid sequence, 182 residues long: Dual-action ribosomal maturation protein DarP (182 aa).

This sequence belongs to the DarP family.

Its subcellular location is the cytoplasm. Functionally, member of a network of 50S ribosomal subunit biogenesis factors which assembles along the 30S-50S interface, preventing incorrect 23S rRNA structures from forming. Promotes peptidyl transferase center (PTC) maturation. The sequence is that of Dual-action ribosomal maturation protein DarP from Yersinia pestis.